Here is a 794-residue protein sequence, read N- to C-terminus: Protein sel-1 homolog 1 (794 aa).

Residues 1 to 21 (MQVRVRLLLLLCAVLLGSAAA) form the signal peptide. Positions 22-737 (SSDEETNQDE…DLFTQLDMDQ (716 aa)) are interaction with ERLEC1, OS9 and SYVN1. Residues 22-738 (SSDEETNQDE…LFTQLDMDQL (717 aa)) are Lumenal-facing. Acidic residues predominate over residues 23 to 32 (SDEETNQDES). 2 disordered regions span residues 23 to 46 (SDEETNQDESLDSKGALPTDGSVK) and 73 to 105 (QDEEESSKSQEEVSVTEDISFLDSPNPSSKTYE). In terms of domain architecture, Fibronectin type-II spans 122 to 170 (AHGEPCHFPFLFLDKEYDECTSDGREDGRLWCATTYDYKTDEKWGFCET). Cystine bridges form between Cys127-Cys153 and Cys141-Cys168. Sel1-like repeat units follow at residues 183–218 (AEAIYQSGMKILNGSTRKNQKREAYRYLQKAAGMNH), 219–254 (TKALERVSYALLFGDYLTQNIQAAKEMFEKLTEEGS), 255–290 (PKGQTGLGFLYASGLGVNSSQAKALVYYTFGALGGN), 291–326 (LIAHMVLGYRYWAGIGVLQSCESALTHYRLVANHVA), 373–409 (VQAQVGLGQLHLHGGRGVEQNHQRAFDYFNLAANAGN), 410–446 (SHAMAFLGKMYSEGSDIVPQSNETALHYFKKAADMGN), 447–482 (PVGQSGLGMAYLYGRGVQVNYDLALKYFQKAAEQGW), 483–518 (VDGQLQLGSMYYNGIGVKRDYKQALKYFNLASQGGH), and 519–554 (ILAFYNLAQMHASGTGVMRSCHTAVELFKNVCERGR). Residues Asn195 and Asn217 are each glycosylated (N-linked (GlcNAc...) asparagine). N-linked (GlcNAc...) asparagine glycosylation is present at Asn272. The segment at 352-537 (NSGMLEEDLI…MHASGTGVMR (186 aa)) is important for homodimerization and oligomerization. An N-linked (GlcNAc...) asparagine glycan is attached at Asn431. Asn608 carries N-linked (GlcNAc...) asparagine glycosylation. 2 Sel1-like repeats span residues 627–662 (TVARIKLGDYHFYGFGTDVDYETAFIHYRLASEQQH) and 664–699 (AQAMFNLGYMHEKGLGIKQDIHLAKRFYDMAAEASP). An interaction with SYVN1 region spans residues 643 to 723 (TDVDYETAFI…VVYFLQYIRE (81 aa)). The tract at residues 738–794 (LLGPEWDLYLMTIIALLLGTVIAYRQRQHQDIPVPRPPGPRPAPPQQEGPPEQQPPQ) is mediates retention in the endoplasmic reticulum. Residues 739-759 (LGPEWDLYLMTIIALLLGTVI) traverse the membrane as a helical segment. At 760 to 794 (AYRQRQHQDIPVPRPPGPRPAPPQQEGPPEQQPPQ) the chain is on the cytoplasmic side. Residues 767-794 (QDIPVPRPPGPRPAPPQQEGPPEQQPPQ) form a disordered region. The segment covering 771 to 794 (VPRPPGPRPAPPQQEGPPEQQPPQ) has biased composition (pro residues).

This sequence belongs to the sel-1 family. In terms of assembly, homodimer and homooligomer. May form a complex with ERLEC1, HSPA5, OS9, and SYVN1. Interacts with FOXRED2 and EDEM1. Interacts with LPL and LMF1; may stabilize the complex formed by LPL and LMF1 and thereby promote the export of LPL dimers. Component of the HRD1 complex, which comprises at least SYNV1/HRD1, DERL1/2, FAM8A1, HERPUD1/HERP, OS9, SEL1L and UBE2J1. SYNV1 assembles with SEL1L and FAM8A1 through its transmembrane domains, but interaction with its cytoplasmic domain is required to confer stability to FAM8A1 and enhance recruitment of HERPUD1. The interaction with SYNV1/HRD1 is direct. In terms of processing, N-glycosylated.

The protein localises to the endoplasmic reticulum membrane. Its function is as follows. Plays a role in the endoplasmic reticulum quality control (ERQC) system also called ER-associated degradation (ERAD) involved in ubiquitin-dependent degradation of misfolded endoplasmic reticulum proteins. Enhances SYVN1 stability. Plays a role in LPL maturation and secretion. Required for normal differentiation of the pancreas epithelium, and for normal exocrine function and survival of pancreatic cells. May play a role in Notch signaling. The polypeptide is Protein sel-1 homolog 1 (Sel1l) (Rattus norvegicus (Rat)).